A 187-amino-acid chain; its full sequence is Threonylcarbamoyl-AMP synthase (187 aa).

The YrdC-like domain maps to 4–187 (TLTLSEAVTA…DARSGHILRL (184 aa)).

The protein belongs to the SUA5 family. TsaC subfamily.

The protein localises to the cytoplasm. It carries out the reaction L-threonine + hydrogencarbonate + ATP = L-threonylcarbamoyladenylate + diphosphate + H2O. In terms of biological role, required for the formation of a threonylcarbamoyl group on adenosine at position 37 (t(6)A37) in tRNAs that read codons beginning with adenine. Catalyzes the conversion of L-threonine, HCO(3)(-)/CO(2) and ATP to give threonylcarbamoyl-AMP (TC-AMP) as the acyladenylate intermediate, with the release of diphosphate. The chain is Threonylcarbamoyl-AMP synthase from Xylella fastidiosa (strain M23).